Reading from the N-terminus, the 1059-residue chain is Potassium transporter TRK1 (1059 aa).

Residues 1-46 (MLYRVSGFYKRHTRNFTNIDYGYYIRNFIHHIASKIYPYAKVVLPN) are Cytoplasmic-facing. A helical transmembrane segment spans residues 47 to 67 (FRAAHYFYILTLVILGSILVY). The Extracellular segment spans residues 68–73 (PVKTCA). An intramembrane segment occupies 74-90 (YIDVLFFTAGASTQAGL). At 91–99 (NTVNVNDLS) the chain is on the extracellular side. A helical transmembrane segment spans residues 100 to 122 (LYQQIVLYLLATLATPIFIHGSL). Residues 123 to 625 (LFVRLYYFER…LGGIEYRAVK (503 aa)) are Cytoplasmic-facing. 3 disordered regions span residues 180–276 (REAE…IDPE), 304–350 (IGSP…EDED), and 404–574 (PWTS…SIEN). Residues 186–203 (SSSSPQSSSSQTSQPVST) show a composition bias toward low complexity. Over residues 236 to 245 (EKIHFEEPQR) the composition is skewed to basic and acidic residues. Polar residues predominate over residues 335–344 (PATNSVGTGN). Residues 412 to 423 (TLSNSSKKGSLS) show a composition bias toward low complexity. 2 stretches are compositionally biased toward acidic residues: residues 428–449 (DTEDDSEDEEYASIDSETSDIS) and 469–490 (YEEDEDEDEHNSDDDDDDDDGE). A compositionally biased stretch (polar residues) spans 524 to 536 (RSNTLDTPQQNTS). A compositionally biased stretch (basic residues) spans 540 to 552 (KIRKKAPKRKTPR). Residues 556–566 (NASFNQHSNVS) show a composition bias toward polar residues. A helical transmembrane segment spans residues 626–649 (LLIKIIVVYYVGFNIIPGVMLSIW). Residues 650 to 668 (IYCMPHYKNLMISSSISPA) are Extracellular-facing. An intramembrane segment occupies 669–685 (WWAFFTSQSSFNDLGLT). The Extracellular portion of the chain corresponds to 686–696 (LTSNSMMSFNQ). Residues 697 to 713 (NAFVQILCSFLIVIGNT) form a helical membrane-spanning segment. Over 714-757 (GFPILLRFIIWVMFKTARPLSLYKESLGFLLDHPRRCFTLLFPS) the chain is Cytoplasmic. Residues 758–781 (VPTWWLFFILVVLNGFDLVIFCIL) traverse the membrane as a helical segment. At 782-796 (DLHDDTFKGVDMGYR) the chain is on the extracellular side. An intramembrane segment occupies 797-813 (VLNGLFQAFCTRTVGFS). The Extracellular segment spans residues 814–820 (VMDLSQL). Residues 821–844 (HAATQVSYLIMMYISVLPIAISVR) form a helical membrane-spanning segment. Topologically, residues 845 to 877 (RTNVYEEQSLGVYAKENAEGVDESAPSNYVGSH) are cytoplasmic. A helical transmembrane segment spans residues 878-899 (LRNQLSYDLWYICLGLFIICIA). Over 900–912 (EGKRLKEQDLRFS) the chain is Extracellular. The stretch at 913-931 (IFAVLFEIVSAYGTVGMSM) is an intramembrane region. Over 932-945 (GYPGVDCSLSGEFN) the chain is Extracellular. The helical transmembrane segment at 946 to 968 (VISKLVIIAMMIRGRHRGLPYTI) threads the bilayer. The Cytoplasmic segment spans residues 969–1059 (DRAIMLPNAA…RYVVRTVSEV (91 aa)).

The protein belongs to the TrkH potassium transport family.

It is found in the cell membrane. It carries out the reaction K(+)(in) = K(+)(out). The enzyme catalyses chloride(in) = chloride(out). With respect to regulation, TRK1-mediated chloride conductance is blocked by 4,4'-diisothiocyanatostilbene-2,2'-disulfonic acid. In terms of biological role, potassium transporter that mediates K(+) influx, as well as Cl(-) efflux as a secondary function. TRK1 is the major K(+) uptake transporter that regulates membrane potential and intracellular pH. The TRK1-mediated Cl(-) efflux should serve as a Cl(-) detoxification route and may play a role in sustaining C.albicans on mammalian epithelial surfaces, or in physiological saline solutions such as saliva. Its function is as follows. Mediates candidacidal activities of cysteine-free peptides, but not of defensins. The hallmark of salivary gland-secreted histatin-5 (Hst 5) killing of C.albicans is the rapid efflux of cellular ATP and other small nucleotides and ions from the cell as well as concurrent intracellular uptake of propidium iodide (PI). TRK1 is the channel for Hst 5-induced killing and histatin-5 may directly or indirectly alter TRK1 function, allowing the efflux of larger anions, including ATP, and the influx of small cationic dyes, such as PI. This Candida albicans (Yeast) protein is Potassium transporter TRK1.